The following is a 438-amino-acid chain: 23S rRNA (uracil(1939)-C(5))-methyltransferase RlmD (438 aa).

One can recognise a TRAM domain in the interval 10 to 69 (KASVNTKHQSVDVVRLDHNGAGIAFVDKKPVFIEGALPGEKAIIQFIEQKKQFSRAKLIK). [4Fe-4S] cluster is bound by residues Cys-82, Cys-88, Cys-91, and Cys-169. S-adenosyl-L-methionine-binding residues include Gln-272, Phe-301, Asn-306, Glu-322, Asn-349, and Asp-370. Cys-396 functions as the Nucleophile in the catalytic mechanism.

Belongs to the class I-like SAM-binding methyltransferase superfamily. RNA M5U methyltransferase family. RlmD subfamily.

The enzyme catalyses uridine(1939) in 23S rRNA + S-adenosyl-L-methionine = 5-methyluridine(1939) in 23S rRNA + S-adenosyl-L-homocysteine + H(+). Its function is as follows. Catalyzes the formation of 5-methyl-uridine at position 1939 (m5U1939) in 23S rRNA. The protein is 23S rRNA (uracil(1939)-C(5))-methyltransferase RlmD of Aliivibrio fischeri (strain ATCC 700601 / ES114) (Vibrio fischeri).